The chain runs to 514 residues: Probable E3 ubiquitin-protein ligase ARI10 (514 aa).

Residues 1 to 18 (MDYSDDDMIDNESGEENN) show a composition bias toward acidic residues. The tract at residues 1 to 26 (MDYSDDDMIDNESGEENNSDGGGNES) is disordered. The TRIAD supradomain stretch occupies residues 117 to 322 (VDIQCGICFE…SDHYACNNYV (206 aa)). Zn(2+) is bound by residues Cys121, Cys124, Cys138, His140, Cys143, Cys146, Cys166, Cys171, Cys210, Cys215, Cys231, Cys233, Cys238, Cys241, His246, Cys251, Cys278, and Cys281. The RING-type 1 zinc-finger motif lies at 121–171 (CGICFESYTRKEIASVSCGHPYCKTCWTGYITTKIEDGPGCLRVKCPEPSC). The segment at 190 to 251 (DKYYRYFLRS…SEDAHSPVDC (62 aa)) adopts an IBR-type zinc-finger fold. An RING-type 2; atypical zinc finger spans residues 278-308 (CPKCKRPIEKSHGCNHMTCSASCGHRFCWIC). The active site involves Cys291. Zn(2+) contacts are provided by Cys296, Cys300, Cys305, Cys308, His315, and Cys318.

The protein belongs to the RBR family. Ariadne subfamily. It depends on Zn(2+) as a cofactor.

It carries out the reaction [E2 ubiquitin-conjugating enzyme]-S-ubiquitinyl-L-cysteine + [acceptor protein]-L-lysine = [E2 ubiquitin-conjugating enzyme]-L-cysteine + [acceptor protein]-N(6)-ubiquitinyl-L-lysine.. It participates in protein modification; protein ubiquitination. Functionally, might act as an E3 ubiquitin-protein ligase, or as part of E3 complex, which accepts ubiquitin from specific E2 ubiquitin-conjugating enzymes and then transfers it to substrates. This chain is Probable E3 ubiquitin-protein ligase ARI10 (ARI10), found in Arabidopsis thaliana (Mouse-ear cress).